Here is a 520-residue protein sequence, read N- to C-terminus: 2-isopropylmalate synthase (520 aa).

Residues 12-274 (IRIFDTTLRD…DSAINTPRIV (263 aa)) form the Pyruvate carboxyltransferase domain. Mn(2+) contacts are provided by aspartate 21, histidine 209, histidine 211, and asparagine 245. A regulatory domain region spans residues 396-520 (RLASMTISDV…VVAGKTAAVA (125 aa)).

Belongs to the alpha-IPM synthase/homocitrate synthase family. LeuA type 1 subfamily. As to quaternary structure, homodimer. The cofactor is Mn(2+).

The protein resides in the cytoplasm. It carries out the reaction 3-methyl-2-oxobutanoate + acetyl-CoA + H2O = (2S)-2-isopropylmalate + CoA + H(+). The protein operates within amino-acid biosynthesis; L-leucine biosynthesis; L-leucine from 3-methyl-2-oxobutanoate: step 1/4. Functionally, catalyzes the condensation of the acetyl group of acetyl-CoA with 3-methyl-2-oxobutanoate (2-ketoisovalerate) to form 3-carboxy-3-hydroxy-4-methylpentanoate (2-isopropylmalate). This Xanthomonas euvesicatoria pv. vesicatoria (strain 85-10) (Xanthomonas campestris pv. vesicatoria) protein is 2-isopropylmalate synthase.